Consider the following 186-residue polypeptide: MNILSLSECVDRLRKNLVIAYPTESVLGLGCNPESIDAVKVLLKLKKRKLNKGFILVASHFNQIRSYISESKLSIYHKKILYSSWPDTITYLLPAKSFVPDWLTGRSNFLGIRISAHNGINKLCSAFGKAIISTSANISGRNPCRTYEEFLKQFGTTVPILCGPLGTRKNPSKILNIINGSLIRHG.

The 184-residue stretch at 3–186 folds into the YrdC-like domain; sequence ILSLSECVDR…IINGSLIRHG (184 aa).

Belongs to the SUA5 family. TsaC subfamily.

The protein localises to the cytoplasm. The enzyme catalyses L-threonine + hydrogencarbonate + ATP = L-threonylcarbamoyladenylate + diphosphate + H2O. Required for the formation of a threonylcarbamoyl group on adenosine at position 37 (t(6)A37) in tRNAs that read codons beginning with adenine. Catalyzes the conversion of L-threonine, HCO(3)(-)/CO(2) and ATP to give threonylcarbamoyl-AMP (TC-AMP) as the acyladenylate intermediate, with the release of diphosphate. The polypeptide is Threonylcarbamoyl-AMP synthase (Buchnera aphidicola subsp. Baizongia pistaciae (strain Bp)).